The chain runs to 108 residues: ATPase inhibitor, mitochondrial (108 aa).

The N-terminal 25 residues, 1–25, are a transit peptide targeting the mitochondrion; sequence MAATALAVRSRIGAWSVWAMQSRGF. The interval 25-48 is disordered; it reads FSSDTPEGVRSGAGAVRDAGGAFG. The interval 26-52 is N-terminal inhibitory region; the sequence is SSDTPEGVRSGAGAVRDAGGAFGKKEQ. Positions 69-108 form a coiled coil; the sequence is ALKKHHENEISHHVKEIERLQKEIERHKQSIKKLKNDDDD. Positions 74–106 are antiparallel alpha-helical coiled coil region; that stretch reads HENEISHHVKEIERLQKEIERHKQSIKKLKNDD. Position 103 is an N6-succinyllysine (K103).

It belongs to the ATPase inhibitor family. As to quaternary structure, homodimer; represents the active form and is present at a pH value below 6.5. Homotetramer; represents the inactive form and is present at a pH value above 7.0.

It localises to the mitochondrion. Its function is as follows. Endogenous F(1)F(o)-ATPase inhibitor limiting ATP depletion when the mitochondrial membrane potential falls below a threshold and the F(1)F(o)-ATP synthase starts hydrolyzing ATP to pump protons out of the mitochondrial matrix. Required to avoid the consumption of cellular ATP when the F(1)F(o)-ATP synthase enzyme acts as an ATP hydrolase. Indirectly acts as a regulator of heme synthesis in erythroid tissues: regulates heme synthesis by modulating the mitochondrial pH and redox potential, allowing FECH to efficiently catalyze the incorporation of iron into protoporphyrin IX to produce heme. This is ATPase inhibitor, mitochondrial from Sus scrofa (Pig).